Here is a 392-residue protein sequence, read N- to C-terminus: Retrovirus-related Pol polyprotein from type-1 retrotransposable element R1 4 (392 aa).

One can recognise a Reverse transcriptase domain in the interval 1–230 (PFADDLAVLV…GGVVIRRRPE (230 aa)). The interval 231-392 (GLKENYNRVL…DEGLSSESEE (162 aa)) is nucleic acid-binding endonuclease.

It carries out the reaction DNA(n) + a 2'-deoxyribonucleoside 5'-triphosphate = DNA(n+1) + diphosphate. The chain is Retrovirus-related Pol polyprotein from type-1 retrotransposable element R1 4 from Nasonia vitripennis (Parasitic wasp).